We begin with the raw amino-acid sequence, 890 residues long: Protein translocase subunit SecA (890 aa).

ATP-binding positions include Q86, 104 to 108 (GEGKT), and D493. The span at 851-872 (EASHGDGDAKKAPVVKKEESGR) shows a compositional bias: basic and acidic residues. Residues 851–873 (EASHGDGDAKKAPVVKKEESGRN) are disordered. Zn(2+)-binding residues include C876, C878, C887, and C888.

Belongs to the SecA family. In terms of assembly, monomer and homodimer. Part of the essential Sec protein translocation apparatus which comprises SecA, SecYEG and auxiliary proteins SecDF. Other proteins may also be involved. Requires Zn(2+) as cofactor.

The protein resides in the cell membrane. Its subcellular location is the cytoplasm. It catalyses the reaction ATP + H2O + cellular proteinSide 1 = ADP + phosphate + cellular proteinSide 2.. In terms of biological role, part of the Sec protein translocase complex. Interacts with the SecYEG preprotein conducting channel. Has a central role in coupling the hydrolysis of ATP to the transfer of proteins into and across the cell membrane, serving as an ATP-driven molecular motor driving the stepwise translocation of polypeptide chains across the membrane. This chain is Protein translocase subunit SecA, found in Alkaliphilus oremlandii (strain OhILAs) (Clostridium oremlandii (strain OhILAs)).